Consider the following 112-residue polypeptide: Nucleoid-associated protein FTF0810c (112 aa).

Residues 1–27 form a disordered region; sequence MNFDMSKLMQQAQKMQEQMKKAQQERE. Residues 17–27 are compositionally biased toward basic and acidic residues; the sequence is EQMKKAQQERE.

This sequence belongs to the YbaB/EbfC family. In terms of assembly, homodimer.

Its subcellular location is the cytoplasm. The protein resides in the nucleoid. In terms of biological role, binds to DNA and alters its conformation. May be involved in regulation of gene expression, nucleoid organization and DNA protection. This is Nucleoid-associated protein FTF0810c from Francisella tularensis subsp. tularensis (strain FSC 198).